Reading from the N-terminus, the 152-residue chain is Sec-independent protein translocase protein TatB (152 aa).

The helical transmembrane segment at 1-21 threads the bilayer; it reads MLDVGFGELFCFGIIALLVLG.

This sequence belongs to the TatB family. As to quaternary structure, the Tat system comprises two distinct complexes: a TatABC complex, containing multiple copies of TatA, TatB and TatC subunits, and a separate TatA complex, containing only TatA subunits. Substrates initially bind to the TatABC complex, which probably triggers association of the separate TatA complex to form the active translocon.

It localises to the cell inner membrane. Functionally, part of the twin-arginine translocation (Tat) system that transports large folded proteins containing a characteristic twin-arginine motif in their signal peptide across membranes. Together with TatC, TatB is part of a receptor directly interacting with Tat signal peptides. TatB may form an oligomeric binding site that transiently accommodates folded Tat precursor proteins before their translocation. The polypeptide is Sec-independent protein translocase protein TatB (Acinetobacter baylyi (strain ATCC 33305 / BD413 / ADP1)).